The chain runs to 289 residues: Diaminopimelate epimerase (289 aa).

Substrate is bound by residues asparagine 13, glutamine 47, and asparagine 67. The active-site Proton donor is cysteine 76. Residues 77 to 78 (GN), asparagine 167, asparagine 200, and 218 to 219 (ER) each bind substrate. The active-site Proton acceptor is cysteine 227. Position 228–229 (228–229 (GT)) interacts with substrate.

It belongs to the diaminopimelate epimerase family. As to quaternary structure, homodimer.

It localises to the cytoplasm. It carries out the reaction (2S,6S)-2,6-diaminopimelate = meso-2,6-diaminopimelate. Its pathway is amino-acid biosynthesis; L-lysine biosynthesis via DAP pathway; DL-2,6-diaminopimelate from LL-2,6-diaminopimelate: step 1/1. Its function is as follows. Catalyzes the stereoinversion of LL-2,6-diaminopimelate (L,L-DAP) to meso-diaminopimelate (meso-DAP), a precursor of L-lysine and an essential component of the bacterial peptidoglycan. The sequence is that of Diaminopimelate epimerase from Burkholderia vietnamiensis (strain G4 / LMG 22486) (Burkholderia cepacia (strain R1808)).